The sequence spans 170 residues: Flavodoxin (170 aa).

The Flavodoxin-like domain occupies 5 to 165 (IGLFYGTQTG…RIKSWVAQLK (161 aa)).

It belongs to the flavodoxin family. FMN is required as a cofactor.

In terms of biological role, low-potential electron donor to a number of redox enzymes. The protein is Flavodoxin (isiB) of Nostoc sp. (strain PCC 7120 / SAG 25.82 / UTEX 2576).